The following is a 452-amino-acid chain: Ribosomal protein uS12 methylthiotransferase RimO (452 aa).

The region spanning 3–118 (GKIGFVSLGC…VMQAIHLHLP (116 aa)) is the MTTase N-terminal domain. Residues Cys12, Cys48, Cys77, Cys149, Cys153, and Cys156 each contribute to the [4Fe-4S] cluster site. In terms of domain architecture, Radical SAM core spans 135–381 (LTPKHYAYLK…MAKAEDISIK (247 aa)). One can recognise a TRAM domain in the interval 384-452 (AKKIGKRVQV…SQGHDLIAET (69 aa)).

This sequence belongs to the methylthiotransferase family. RimO subfamily. [4Fe-4S] cluster is required as a cofactor.

Its subcellular location is the cytoplasm. The catalysed reaction is L-aspartate(89)-[ribosomal protein uS12]-hydrogen + (sulfur carrier)-SH + AH2 + 2 S-adenosyl-L-methionine = 3-methylsulfanyl-L-aspartate(89)-[ribosomal protein uS12]-hydrogen + (sulfur carrier)-H + 5'-deoxyadenosine + L-methionine + A + S-adenosyl-L-homocysteine + 2 H(+). Functionally, catalyzes the methylthiolation of an aspartic acid residue of ribosomal protein uS12. This is Ribosomal protein uS12 methylthiotransferase RimO from Polynucleobacter asymbioticus (strain DSM 18221 / CIP 109841 / QLW-P1DMWA-1) (Polynucleobacter necessarius subsp. asymbioticus).